A 107-amino-acid chain; its full sequence is Heme-degrading monooxygenase (107 aa).

One can recognise an ABM domain in the interval 2–94 (IIVTNTAKIT…YILDNKIAYY (93 aa)). A Fe cation-binding site is contributed by asparagine 6. Histidine 76 lines the heme pocket.

This sequence belongs to the antibiotic biosynthesis monooxygenase family. Heme-degrading monooxygenase IsdG subfamily. As to quaternary structure, homodimer.

The protein resides in the cytoplasm. The enzyme catalyses heme b + 3 reduced [NADPH--hemoprotein reductase] + 3 O2 = biliverdin IXalpha + CO + Fe(2+) + 3 oxidized [NADPH--hemoprotein reductase] + 3 H2O + H(+). In terms of biological role, allows bacterial pathogens to use the host heme as an iron source. Catalyzes the oxidative degradation of the heme macrocyclic porphyrin ring to the biliverdin in the presence of a suitable electron donor such as ascorbate or NADPH--cytochrome P450 reductase, with subsequent release of free iron. This Bacillus cereus (strain ATCC 14579 / DSM 31 / CCUG 7414 / JCM 2152 / NBRC 15305 / NCIMB 9373 / NCTC 2599 / NRRL B-3711) protein is Heme-degrading monooxygenase.